Consider the following 279-residue polypeptide: Energy-coupling factor transporter ATP-binding protein EcfA1 (279 aa).

The region spanning 5–240 (IELNNIQFNY…GEALVEMGLD (236 aa)) is the ABC transporter domain. 40–47 (GHNGSGKS) provides a ligand contact to ATP.

Belongs to the ABC transporter superfamily. Energy-coupling factor EcfA family. As to quaternary structure, forms a stable energy-coupling factor (ECF) transporter complex composed of 2 membrane-embedded substrate-binding proteins (S component), 2 ATP-binding proteins (A component) and 2 transmembrane proteins (T component).

Its subcellular location is the cell membrane. In terms of biological role, ATP-binding (A) component of a common energy-coupling factor (ECF) ABC-transporter complex. Unlike classic ABC transporters this ECF transporter provides the energy necessary to transport a number of different substrates. This chain is Energy-coupling factor transporter ATP-binding protein EcfA1, found in Enterococcus faecalis (strain ATCC 700802 / V583).